We begin with the raw amino-acid sequence, 402 residues long: MADVYLDNNATTRVDDEIVQAMLPFFTEQFGNPSSLHSFGNQVGMALKKARQSVQKLLGAEHDSEILFTSCGTESDSTAILSALKAQPERKTVITTVVEHPAVLSLCDYLASEGYTVHKLPVDKKGRLDLEHYASLLTDDVAVVSVMWANNETGTLFPIEEMARLADDAGIMFHTDAVQAVGKVPIDLKNSSIHMLSLCGHKLHAPKGVGVLYLRRGTRFRPLLRGGHQERGRRAGTENAASIIGLGVAAERALQFMEHENTEVNALRDKLEAGILAVVPHAFVTGDPDNRLPNTANIAFEYIEGEAILLLLNKVGIAASSGSACTSGSLEPSHVMRAMDIPYTAAHGTVRFSLSRYTTEEEIDRVIREVPPIVAQLRNVSPYWSGNGPVEDPGKAFAPVYG.

Pyridoxal 5'-phosphate contacts are provided by residues 72–73 (GT), Asn-151, Gln-179, and 199–201 (CGH). The residue at position 202 (Lys-202) is an N6-(pyridoxal phosphate)lysine. Thr-237 provides a ligand contact to pyridoxal 5'-phosphate. Cys-325 (cysteine persulfide intermediate) is an active-site residue. Residue Cys-325 coordinates [2Fe-2S] cluster.

This sequence belongs to the class-V pyridoxal-phosphate-dependent aminotransferase family. NifS/IscS subfamily. As to quaternary structure, homodimer. The cofactor is pyridoxal 5'-phosphate.

The enzyme catalyses (sulfur carrier)-H + L-cysteine = (sulfur carrier)-SH + L-alanine. Inhibited by equimolar concentrations of p-chloromercuribenzoic acid, iodoacetamide or N-ethylmaleimide. Functionally, catalyzes the removal of elemental sulfur atoms from cysteine to produce alanine. Seems to participate in the biosynthesis of the nitrogenase metalloclusters by providing the inorganic sulfur required for the Fe-S core formation. This Azotobacter vinelandii protein is Cysteine desulfurase NifS.